We begin with the raw amino-acid sequence, 207 residues long: Peptidyl-tRNA hydrolase (207 aa).

Tyrosine 17 contributes to the tRNA binding site. The Proton acceptor role is filled by histidine 22. TRNA contacts are provided by phenylalanine 68, asparagine 70, and asparagine 116.

This sequence belongs to the PTH family. As to quaternary structure, monomer.

Its subcellular location is the cytoplasm. The catalysed reaction is an N-acyl-L-alpha-aminoacyl-tRNA + H2O = an N-acyl-L-amino acid + a tRNA + H(+). Its function is as follows. Hydrolyzes ribosome-free peptidyl-tRNAs (with 1 or more amino acids incorporated), which drop off the ribosome during protein synthesis, or as a result of ribosome stalling. Catalyzes the release of premature peptidyl moieties from peptidyl-tRNA molecules trapped in stalled 50S ribosomal subunits, and thus maintains levels of free tRNAs and 50S ribosomes. This Buchnera aphidicola subsp. Baizongia pistaciae (strain Bp) protein is Peptidyl-tRNA hydrolase.